A 364-amino-acid polypeptide reads, in one-letter code: Ribosomal RNA large subunit methyltransferase F (364 aa).

Residues 1-17 (MPKPAIKTAAKPATSSA) show a composition bias toward low complexity. The disordered stretch occupies residues 1–53 (MPKPAIKTAAKPATSSAGKRGKPITPKSVAKPQAAKPKTVSKPKVKPGEKKRL). Basic residues predominate over residues 39-53 (TVSKPKVKPGEKKRL).

The protein belongs to the methyltransferase superfamily. METTL16/RlmF family.

The protein localises to the cytoplasm. The catalysed reaction is adenosine(1618) in 23S rRNA + S-adenosyl-L-methionine = N(6)-methyladenosine(1618) in 23S rRNA + S-adenosyl-L-homocysteine + H(+). Specifically methylates the adenine in position 1618 of 23S rRNA. The protein is Ribosomal RNA large subunit methyltransferase F of Shewanella sp. (strain MR-4).